We begin with the raw amino-acid sequence, 118 residues long: DNA-binding protein inhibitor ID-3-B (118 aa).

The region spanning 32-84 (SLKGAGIDETMGLLYDMNGCYSKLKELVPGIPQGSKLSQVEILQHVIDYIFDL) is the bHLH domain.

Homodimer. Heterodimer with other HLH proteins. Interacts (via HLH domain) with the bHLH protein hes4/hairy2 (via Orange domain). Interacts with stat3.

Its subcellular location is the nucleus. Its function is as follows. Transcriptional regulator (lacking a basic DNA binding domain) which negatively regulates the basic helix-loop-helix (bHLH) transcription factors by forming heterodimers and inhibiting their DNA binding and transcriptional activity. Influences cell fate decisions in the embryo by sequestering and blocking the activity of the bHLH transcription factors that control these decisions. Inhibits the binding of myogenic bHLH-containing complexes to E-box DNA, thereby preventing activation of muscle-specific target genes. Also inhibits the activity of neurogenic factor neurod1/neuroD. Plays a role in cell cycle progression and survival of neural crest progenitors; binding to either hes4-B/hairy2b or stat3 blocks the formation of transcription factor complexes and the repressor function of hes4-B/hairy2B, to allow neural crest progenitors to differentiate. May play a role in the regulation of the circadian rhythm. The protein is DNA-binding protein inhibitor ID-3-B (id3-b) of Xenopus laevis (African clawed frog).